The sequence spans 349 residues: 5-deoxyribose 1-phosphate isomerase (349 aa).

Substrate-binding positions include 49–51, Arg92, and Gln199; that span reads RGA. Asp240 acts as the Proton donor in catalysis. Position 250–251 (250–251) interacts with substrate; that stretch reads NK.

It belongs to the EIF-2B alpha/beta/delta subunits family. DrdI subfamily.

It carries out the reaction 5-deoxy-alpha-D-ribose 1-phosphate = 5-deoxy-D-ribulose 1-phosphate. The protein operates within carbohydrate degradation. Catalyzes the isomerization of 5-deoxy-alpha-D-ribose 1-phosphate to 5-deoxy-D-ribulose 1-phosphate, as part of a 5-deoxyribose salvage pathway that recycles this toxic radical SAM enzyme by-product to mainstream metabolites. This is 5-deoxyribose 1-phosphate isomerase from Clostridium botulinum (strain 657 / Type Ba4).